The chain runs to 601 residues: Leucine zipper putative tumor suppressor 1 (601 aa).

Residue glycine 2 is the site of N-myristoyl glycine attachment. Residues 135-190 (GAILHSSPESTNHQLHPMPPDKPKEQELKPGLCSGALSDSGRNSMSSLPTHSTTSS) are disordered. Residues 153-162 (PPDKPKEQEL) are compositionally biased toward basic and acidic residues. Over residues 174-190 (SGRNSMSSLPTHSTTSS) the composition is skewed to polar residues. Residues 255–573 (PLSTDECTIQ…RLEKALQQLA (319 aa)) are a coiled coil.

It belongs to the LZTS family. In terms of assembly, binds EEF1G, TLK2 and CDK1. In terms of processing, phosphorylated on serine residues. Hyperphosphorylated by the cAMP-dependent kinase PKA during cell-cycle progression. Highly expressed in brain, in particular in cortex, the CA2 region of the hippocampus, olfactory bulb, striatum and pons. Not detectable in the other tissues tested.

It is found in the cytoplasm. Its subcellular location is the cell membrane. The protein resides in the cell projection. It localises to the dendritic spine. The protein localises to the postsynaptic density. It is found in the synapse. In terms of biological role, involved in the regulation of cell growth. May stabilize the active CDC2-cyclin B1 complex and thereby contribute to the regulation of the cell cycle and the prevention of uncontrolled cell proliferation. May act as tumor suppressor. This Rattus norvegicus (Rat) protein is Leucine zipper putative tumor suppressor 1 (Lzts1).